We begin with the raw amino-acid sequence, 211 residues long: uncharacterized protein (211 aa).

This sequence belongs to the A.longa ORF167/ORF288 family.

The protein resides in the plastid. This is an uncharacterized protein from Euglena longa (Euglenophycean alga).